A 406-amino-acid chain; its full sequence is Subtilisin-like protease CPC735_023170 (406 aa).

The N-terminal stretch at 1-20 (MRLFQSTCVLVGTVLPLFTA) is a signal peptide. The propeptide occupies 21-118 (FPISSPREIE…VEPDSMAYVT (98 aa)). The 81-residue stretch at 35–115 (KYIITFKKGI…VESVEPDSMA (81 aa)) folds into the Inhibitor I9 domain. Asparagine 125 is a glycosylation site (N-linked (GlcNAc...) asparagine). The Peptidase S8 domain occupies 127–406 (TYGPRRISHR…NKLAYNGSGK (280 aa)). Residues aspartate 161 and histidine 192 each act as charge relay system in the active site. N-linked (GlcNAc...) asparagine glycosylation is present at asparagine 239. The disordered stretch occupies residues 283 to 309 (NDGRDAGRNSPGSAPESITVGSINSRR). Asparagine 346 is a glycosylation site (N-linked (GlcNAc...) asparagine). Serine 351 serves as the catalytic Charge relay system. Asparagine 402 carries an N-linked (GlcNAc...) asparagine glycan.

The protein belongs to the peptidase S8 family.

The protein resides in the secreted. Its function is as follows. Secreted subtilisin-like serine protease with keratinolytic activity that contributes to pathogenicity. The protein is Subtilisin-like protease CPC735_023170 of Coccidioides posadasii (strain C735) (Valley fever fungus).